We begin with the raw amino-acid sequence, 447 residues long: GTPase Der (447 aa).

EngA-type G domains follow at residues 2–166 (YRVA…PEYE) and 183–358 (IKVA…NQSW). Residues 8–15 (GRPNVGKS), 55–59 (DTGGY), 118–121 (NKID), 189–196 (GKPNAGKS), 236–240 (DTAGL), and 301–304 (NKID) contribute to the GTP site. The KH-like domain occupies 359 to 443 (KRVGTGQLNR…PIKLLLRGKE (85 aa)).

It belongs to the TRAFAC class TrmE-Era-EngA-EngB-Septin-like GTPase superfamily. EngA (Der) GTPase family. In terms of assembly, associates with the 50S ribosomal subunit.

Its function is as follows. GTPase that plays an essential role in the late steps of ribosome biogenesis. In Persephonella marina (strain DSM 14350 / EX-H1), this protein is GTPase Der.